The following is a 267-amino-acid chain: NAD kinase (267 aa).

Asp45 serves as the catalytic Proton acceptor. NAD(+)-binding positions include 45 to 46, 121 to 122, Lys147, Asp149, 160 to 165, and Ala184; these read DG, NE, and TAYSKS.

This sequence belongs to the NAD kinase family. A divalent metal cation serves as cofactor.

The protein localises to the cytoplasm. It catalyses the reaction NAD(+) + ATP = ADP + NADP(+) + H(+). Involved in the regulation of the intracellular balance of NAD and NADP, and is a key enzyme in the biosynthesis of NADP. Catalyzes specifically the phosphorylation on 2'-hydroxyl of the adenosine moiety of NAD to yield NADP. The chain is NAD kinase from Lactobacillus gasseri (strain ATCC 33323 / DSM 20243 / BCRC 14619 / CIP 102991 / JCM 1131 / KCTC 3163 / NCIMB 11718 / NCTC 13722 / AM63).